Reading from the N-terminus, the 1729-residue chain is MTTLALNLAQYNDPITKGIIAQESLRRVRPDLKAVVNVNPYAIPTSAALVLEKLGIGTHPMSLAVHPHAPCKAIENQILNTVGHLLPKEQPVTFMAMKKSKLNMLRRHPSRADTFINPIYHPRDNVRYGLDPDPDQDASITASFLEVKTSTAFMQDTLHYLTPEDLLDIFETSPKLENLIASFVLPVEATRNMKSLYPDLYSIHYTHGGFQWAPSGHLGDAYFHEPWQLYWLRCGSLTRLIEEETTTTVQPPPGFEGEAYTRVRKEVRELKIYAERVTSIGAHHLFIFSRNAKATPRVRSYSQNGKWVTLPRIFRPVSHNVQTPLKQEVANSLMLYTYAVRPSLKDVAAKVRQKFDEKDLAEHSPLEITHLINYIYYIDQRAYLTNDDDILSDNLLKRWIFTPIQAAYKKAKGFLLGPDDFQKLLKALEWQPVTFDYAVDHYKSNPWRIHASRTGAKMRQLKNFLSRTTGLCEAVEDDALEGSELLKELEGNMWFRNPSEVEKEVFDAIVADLPPDSQRSELILEDPNSNARDYLPIQQDQPSVTQGPDEAAQTQTPTATSMVTNSVAARMPPPVPRTLREHHEQFPTTVRASFEQPSSTRAPETSENNTPAESVTPSPRAIYVGDFAIMDANASTSRASSPSPRRTVVSPRQPEAQNETLGRQIVSRVSPAHGCQMSPYAAQLAHQLSEQTAYTDVIGQRMVAFYSQHSRSYKYGRHEHRSQSWLPVIDSLQVALGLDESYDHCLIQRYRKHARVGLHADDEECYEPDSTIVTLNLYGNADFLIERNTDKASETITLQHNDMLFMPSGMQVTHRHAVCSLYEGRVSITFRNKTKDYLRKSAPDMNPVEQPGASAGQLTGPLDHRPEELPWEHWIPRLNRLGFTGLQKQTDPEGKLIYPITEIRQDMVYVPFPNCCPGPLRKDLEAMGRRPVRYTVDTGRALTLASDIKNNRVGALLQNADLTWKTLLVEYCRMEPTSVPMTVIHGAGGSGKSKLLQDHLNRAELNVVIIVPTRVLQQDWRNKMTEFPSFLVQTYEAAMMESAPQMVVFDDYGKLPHGYIDLFCQFHPSVEYVILTGDARQSTYYEYNSDAGIRNLPTNIEVFKQYCGYYINCTHRNKQDLANMLGVYSEKMGSTHFTFGNTCETGSLLLVPSGTQKTVMGEAGHKTETYAGCQGITADKVQIMIDHDTHKSADSHMYTALSRATEHIHFYNSIAGLNTARFHAKLNLTPYLKTFIQVITERAAAETEPAEYTVQAPTARTHIPVENCSTFLEKDLEEQRAKEDREVYTQAGATNVFQTNSPIVQCFQHQQPKDGALSIITHAKRLQYASAEANQAEYRAKLQIGAALWENFKTAMEIPDEPVPFIRDLWEQSEAEVLSTYLSKSEMAIKNGKNRQDPDWQDERMFVYLKAQWVTKASKFNLPTAKAGQTISAFKQAVVMKFGAMARYLRRITPKPDNIRINCEMQPQDISKWALGLDSHNRPTKQKWNFERPAFASDFEAFDQSQDGAMLHFEALWARHFNVPSSLIEEYLFLKMHAQAPKGYLTIMRLTGEGPTFDANTACSIAYNHTRYEIPKSCMQLYAGDDMLLDQVPVEKTGFKNIAAGLKLTAKTEIFEQKRGKWGEFCSWWMTPYGLVKDPITLYHRILLASEIGDLSKKIDAYAIEAEPAYALQGRLFDCFNEEQMTAHYGTIRRLIIEGKTNFSLDDQAPRHQDLQGILNCMDAKFMYH.

Residues 59–232 enclose the Alphavirus-like MT domain; the sequence is HPMSLAVHPH…FHEPWQLYWL (174 aa). 2 disordered regions span residues 528–619 and 635–663; these read NSNA…TPSP and STSRASSPSPRRTVVSPRQPEAQNETLGR. 2 stretches are compositionally biased toward polar residues: residues 538-567 and 586-617; these read QQDQPSVTQGPDEAAQTQTPTATSMVTNSV and FPTTVRASFEQPSSTRAPETSENNTPAESVTP. Low complexity predominate over residues 635–652; sequence STSRASSPSPRRTVVSPR. Positions 741–834 constitute a Fe2OG dioxygenase domain; that stretch reads SYDHCLIQRY…RVSITFRNKT (94 aa). His759, Asp761, and His816 together coordinate Fe cation. Residue Arg825 participates in 2-oxoglutarate binding. The disordered stretch occupies residues 841–862; that stretch reads SAPDMNPVEQPGASAGQLTGPL. The (+)RNA virus helicase ATP-binding domain maps to 957–1111; that stretch reads LQNADLTWKT…VFKQYCGYYI (155 aa). The region spanning 1112–1247 is the (+)RNA virus helicase C-terminal domain; that stretch reads NCTHRNKQDL…VITERAAAET (136 aa). Residues 1492–1599 enclose the RdRp catalytic domain; sequence RPAFASDFEA…DQVPVEKTGF (108 aa).

It belongs to the potexvirus/carlavirus RNA replication protein family. It depends on Fe(2+) as a cofactor.

It catalyses the reaction RNA(n) + a ribonucleoside 5'-triphosphate = RNA(n+1) + diphosphate. It carries out the reaction ATP + H2O = ADP + phosphate + H(+). In terms of biological role, RNA replication. The central part of this protein possibly functions as an ATP-binding helicase. The sequence is that of RNA-directed RNA polymerase (ORF1) from Lolium latent virus (isolate Lolium/USA/US1/-) (LoLV).